A 2006-amino-acid polypeptide reads, in one-letter code: MAQSVLVPPGPDSFRFFTRESLAAIEQRIAEEKAKRPKQERKDEDDENGPKPNSDLEAGKSLPFIYGDIPPEMVSEPLEDLDPYYINKKTFIVLNKGKAISRFSATSALYILTPFNPIRKLAIKILVHSLFNVLIMCTILTNCVFMTMSNPPDWTKNVEYTFTGIYTFESLIKILARGFCLEDFTFLRDPWNWLDFTVITFAYVTEFVNLGNVSALRTFRVLRALKTISVIPGLKTIVGALIQSVKKLSDVMILTVFCLSVFALIGLQLFMGNLRNKCLQWPPDNSTFEINITSFFNNSLDWNGTAFNRTMNMFNWDEYIEDKSHFYFLEGQNDALLCGNSSDAGQCPEGYICVKAGRNPNYGYTSFDTFSWAFLSLFRLMTQDFWENLYQLTLRAAGKTYMIFFVLVIFLGSFYLINLILAVVAMAYEEQNQATLEEAEQKEAEFQQMLEQLKKQQEEAQAAAAAASAESRDFSGAGGIGVFSESSSVASKLSSKSEKELKNRRKKKKQKEQAGEEEKEDAVRKSASEDSIRKKGFRFSLEGSRLTYEKRFSSPHQSLLSIRGSLFSPRRNSRASLFSFKGRVKDIGSENDFADDEHSTFEDNDSRRDSLFVPHRHGERRPSNVSQASRASRGIPTLPMNGKMHSAVDCNGVVSLVGGPSALTSPVGQLLPEGTTTETEIRKRRSSSYHVSMDLLEDPTSRQRAMSMASILTNTMEELEESRQKCPPCWYKFANMCLIWDCCKPWLKVKHVVNLVVMDPFVDLAITICIVLNTLFMAMEHYPMTEQFSSVLSVGNLVFTGIFTAEMFLKIIAMDPYYYFQEGWNIFDGFIVSLSLMELGLANVEGLSVLRSFRLLRVFKLAKSWPTLNMLIKIIGNSVGALGNLTLVLAIIVFIFAVVGMQLFGKSYKECVCKISNDCELPRWHMHDFFHSFLIVFRVLCGEWIETMWDCMEVAGQTMCLTVFMMVMVIGNLVVLNLFLALLLSSFSSDNLAATDDDNEMNNLQIAVGRMQKGIDFVKRKIREFIQKAFVRKQKALDEIKPLEDLNNKKDSCISNHTTIEIGKDLNYLKDGNGTTSGIGSSVEKYVVDESDYMSFINNPSLTVTVPIAVGESDFENLNTEEFSSESDMEESKEKLNATSSSEGSTVDIGAPAEGEQPEAEPEESLEPEACFTEDCVRKFKCCQISIEEGKGKLWWNLRKTCYKIVEHNWFETFIVFMILLSSGALAFEDIYIEQRKTIKTMLEYADKVFTYIFILEMLLKWVAYGFQMYFTNAWCWLDFLIVDVSLVSLTANALGYSELGAIKSLRTLRALRPLRALSRFEGMRVVVNALLGAIPSIMNVLLVCLIFWLIFSIMGVNLFAGKFYHCINYTTGEMFDVSVVNNYSECQALIESNQTARWKNVKVNFDNVGLGYLSLLQVATFKGWMDIMYAAVDSRNVELQPKYEDNLYMYLYFVIFIIFGSFFTLNLFIGVIIDNFNQQKKKFGGQDIFMTEEQKKYYNAMKKLGSKKPQKPIPRPANKFQGMVFDFVTKQVFDISIMILICLNMVTMMVETDDQSQEMTNILYWINLVFIVLFTGECVLKLISLRHYYFTIGWNIFDFVVVILSIVGMFLAELIEKYFVSPTLFRVIRLARIGRILRLIKGAKGIRTLLFALMMSLPALFNIGLLLFLVMFIYAIFGMSNFAYVKREVGIDDMFNFETFGNSMICLFQITTSAGWDGLLAPILNSGPPDCDPEKDHPGSSVKGDCGNPSVGIFFFVSYIIISFLVVVNMYIAVILENFSVATEESAEPLSEDDFEMFYEVWEKFDPDATQFIEFCKLSDFAAALDPPLLIAKPNKVQLIAMDLPMVSGDRIHCLDILFAFTKRVLGESGEMDALRIQMEERFMASNPSKVSYEPITTTLKRKQEEVSAIVIQRAYRRYLLKQKVKKVSSIYKKDKGKEDEGTPIKEDIITDKLNENSTPEKTDVTPSTTSPPSYDSVTKPEKEKFEKDKSEKEDKGKDIRESKK.

The residue at position 4 (serine 4) is a Phosphoserine. A disordered region spans residues 28 to 61; it reads RIAEEKAKRPKQERKDEDDENGPKPNSDLEAGKS. Lysine 38 is covalently cross-linked (Glycyl lysine isopeptide (Lys-Gly) (interchain with G-Cter in SUMO1)). The I repeat unit spans residues 111–456; the sequence is ILTPFNPIRK…QQMLEQLKKQ (346 aa). The helical transmembrane segment at 130–148 threads the bilayer; the sequence is LFNVLIMCTILTNCVFMTM. Residues 156–176 form a helical membrane-spanning segment; the sequence is KNVEYTFTGIYTFESLIKILA. A helical membrane pass occupies residues 191-208; that stretch reads WNWLDFTVITFAYVTEFV. A helical transmembrane segment spans residues 215–231; that stretch reads ALRTFRVLRALKTISVI. The helical transmembrane segment at 251–270 threads the bilayer; sequence VMILTVFCLSVFALIGLQLF. Residues cysteine 278 and cysteine 338 are joined by a disulfide bond. N-linked (GlcNAc...) asparagine glycosylation is found at asparagine 285, asparagine 291, asparagine 297, asparagine 303, asparagine 308, and asparagine 340. The pore-forming intramembrane region spans 370–394; the sequence is FSWAFLSLFRLMTQDFWENLYQLTL. Residues 402-422 traverse the membrane as a helical segment; sequence MIFFVLVIFLGSFYLINLILA. 17 positions are modified to phosphoserine: serine 468, serine 471, serine 484, serine 526, serine 528, serine 531, serine 553, serine 554, serine 558, serine 573, serine 576, serine 589, serine 610, serine 623, serine 687, serine 688, and serine 722. The disordered stretch occupies residues 494-529; the sequence is SSKSEKELKNRRKKKKQKEQAGEEEKEDAVRKSASE. Residues 511–529 are compositionally biased toward basic and acidic residues; it reads KEQAGEEEKEDAVRKSASE. Residues 589 to 635 form a disordered region; the sequence is SENDFADDEHSTFEDNDSRRDSLFVPHRHGERRPSNVSQASRASRGI. A compositionally biased stretch (basic and acidic residues) spans 596-610; sequence DEHSTFEDNDSRRDS. Residues 742 to 1014 form an II repeat; it reads CCKPWLKVKH…QIAVGRMQKG (273 aa). A helical transmembrane segment spans residues 761–779; it reads FVDLAITICIVLNTLFMAM. The helical transmembrane segment at 791 to 810 threads the bilayer; that stretch reads VLSVGNLVFTGIFTAEMFLK. The helical transmembrane segment at 825-844 threads the bilayer; that stretch reads NIFDGFIVSLSLMELGLANV. A helical membrane pass occupies residues 847–864; sequence LSVLRSFRLLRVFKLAKS. The chain crosses the membrane as a helical span at residues 881 to 899; the sequence is ALGNLTLVLAIIVFIFAVV. An intrachain disulfide couples cysteine 913 to cysteine 919. The tract at residues 918-919 is binds SCN2B; that stretch reads DC. The segment at residues 929 to 949 is an intramembrane region (pore-forming); that stretch reads FFHSFLIVFRVLCGEWIETMW. Cysteine 951 and cysteine 960 are disulfide-bonded. A helical transmembrane segment spans residues 963–983; it reads VFMMVMVIGNLVVLNLFLALL. Residues 1121 to 1167 are disordered; it reads EEFSSESDMEESKEKLNATSSSEGSTVDIGAPAEGEQPEAEPEESLE. Residues 1156–1167 show a composition bias toward acidic residues; it reads EQPEAEPEESLE. The III repeat unit spans residues 1191–1505; the sequence is KGKLWWNLRK…KKYYNAMKKL (315 aa). A helical membrane pass occupies residues 1211–1228; sequence FETFIVFMILLSSGALAF. The chain crosses the membrane as a helical span at residues 1242-1260; the sequence is MLEYADKVFTYIFILEMLL. Residues 1275–1293 traverse the membrane as a helical segment; that stretch reads WCWLDFLIVDVSLVSLTAN. A helical transmembrane segment spans residues 1302–1320; it reads AIKSLRTLRALRPLRALSR. A helical transmembrane segment spans residues 1338–1357; that stretch reads IMNVLLVCLIFWLIFSIMGV. A disulfide bridge connects residues cysteine 1367 and cysteine 1387. The pore-forming intramembrane region spans 1410–1431; that stretch reads GLGYLSLLQVATFKGWMDIMYA. A helical membrane pass occupies residues 1449 to 1470; that stretch reads YMYLYFVIFIIFGSFFTLNLFI. Serine 1507 bears the Phosphoserine mark. Residues 1514-1812 form an IV repeat; that stretch reads IPRPANKFQG…WEKFDPDATQ (299 aa). A helical transmembrane segment spans residues 1534 to 1551; it reads FDISIMILICLNMVTMMV. Residues 1563–1581 traverse the membrane as a helical segment; the sequence is ILYWINLVFIVLFTGECVL. A helical membrane pass occupies residues 1594–1611; that stretch reads GWNIFDFVVVILSIVGMF. A helical transmembrane segment spans residues 1625 to 1641; that stretch reads LFRVIRLARIGRILRLI. The helical transmembrane segment at 1661-1678 threads the bilayer; sequence LFNIGLLLFLVMFIYAIF. The segment at residues 1701-1723 is an intramembrane region (pore-forming); that stretch reads FGNSMICLFQITTSAGWDGLLAP. A disulfide bridge links cysteine 1732 with cysteine 1747. Residues 1754–1776 traverse the membrane as a helical segment; sequence IFFFVSYIIISFLVVVNMYIAVI. Residues 1906-1935 form the IQ domain; it reads EEVSAIVIQRAYRRYLLKQKVKKVSSIYKK. The residue at position 1931 (serine 1931) is a Phosphoserine. Residues 1934-1965 show a composition bias toward basic and acidic residues; that stretch reads KKDKGKEDEGTPIKEDIITDKLNENSTPEKTD. The segment at 1934–2006 is disordered; sequence KKDKGKEDEG…KGKDIRESKK (73 aa). Phosphothreonine occurs at positions 1944, 1964, and 1967. Serine 1972 bears the Phosphoserine mark. The span at 1980-2006 shows a compositional bias: basic and acidic residues; the sequence is TKPEKEKFEKDKSEKEDKGKDIRESKK.

Belongs to the sodium channel (TC 1.A.1.10) family. Nav1.2/SCN2A subfamily. As to quaternary structure, heterooligomer of a large alpha subunit and a smaller beta subunit. Heterooligomer with SCN2B or SCN4B; disulfide-linked. Interacts with NEDD4L. Interacts with CALM. Interacts with TMEM233. Sumoylated at Lys-38. Sumoylation is induced by hypoxia, increases voltage-gated sodium current and mediates the early response to acute hypoxia in neurons. Sumoylated SCN2A is located at the cell membrane. Expressed in brain (at protein level). Detected in hippocampus, cortex and brain stem.

It localises to the cell membrane. The enzyme catalyses Na(+)(in) = Na(+)(out). In terms of biological role, mediates the voltage-dependent sodium ion permeability of excitable membranes. Assuming opened or closed conformations in response to the voltage difference across the membrane, the protein forms a sodium-selective channel through which Na(+) ions may pass in accordance with their electrochemical gradient. Implicated in the regulation of hippocampal replay occurring within sharp wave ripples (SPW-R) important for memory. The chain is Sodium channel protein type 2 subunit alpha from Mus musculus (Mouse).